Consider the following 244-residue polypeptide: Myrosinase MB1 (244 aa).

N32 is a glycosylation site (N-linked (GlcNAc...) asparagine). Y51 lines the substrate pocket. E125 functions as the Nucleophile in the catalytic mechanism. Substrate is bound by residues W173 and 180–181; that span reads EF. The N-linked (GlcNAc...) asparagine glycan is linked to N216.

Belongs to the glycosyl hydrolase 1 family. In terms of assembly, homodimer. In terms of tissue distribution, in vacuoles called myrosin grains of a certain class of cells, myrosin cells, distributed in the cotyledons and the axis of the embryo as well as in different organs of the growing plant.

The protein resides in the vacuole. It carries out the reaction a thioglucoside + H2O = a sugar + a thiol.. Functionally, degradation of glucosinolates (glucose residue linked by a thioglucoside bound to an amino acid derivative) to glucose, sulfate and any of the products: thiocyanates, isothiocyanates, nitriles, epithionitriles or oxazolidine-2-thiones. The protein is Myrosinase MB1 of Sinapis alba (White mustard).